A 148-amino-acid chain; its full sequence is Glutamyl-tRNA(Gln) amidotransferase subunit C, mitochondrial (148 aa).

Belongs to the GatC family. In terms of assembly, subunit of the heterotrimeric GatCAB amidotransferase (AdT) complex, composed of A, B and C subunits.

The protein resides in the mitochondrion. It carries out the reaction L-glutamyl-tRNA(Gln) + L-glutamine + ATP + H2O = L-glutaminyl-tRNA(Gln) + L-glutamate + ADP + phosphate + H(+). Its function is as follows. Allows the formation of correctly charged Gln-tRNA(Gln) through the transamidation of misacylated Glu-tRNA(Gln) in the mitochondria. The reaction takes place in the presence of glutamine and ATP through an activated gamma-phospho-Glu-tRNA(Gln). In Drosophila yakuba (Fruit fly), this protein is Glutamyl-tRNA(Gln) amidotransferase subunit C, mitochondrial.